Reading from the N-terminus, the 1016-residue chain is Mediator of RNA polymerase II transcription subunit 5 (1016 aa).

The protein belongs to the Mediator complex subunit 5 family. In terms of assembly, component of the Mediator complex.

The protein resides in the nucleus. Its function is as follows. Component of the Mediator complex, a coactivator involved in the regulated transcription of nearly all RNA polymerase II-dependent genes. Mediator functions as a bridge to convey information from gene-specific regulatory proteins to the basal RNA polymerase II transcription machinery. Mediator is recruited to promoters by direct interactions with regulatory proteins and serves as a scaffold for the assembly of a functional preinitiation complex with RNA polymerase II and the general transcription factors. The polypeptide is Mediator of RNA polymerase II transcription subunit 5 (nut1) (Aspergillus terreus (strain NIH 2624 / FGSC A1156)).